The chain runs to 114 residues: uncharacterized protein (114 aa).

Positions Met1 to Glu20 are enriched in basic and acidic residues. The tract at residues Met1–Gln22 is disordered.

Its function is as follows. May be involved in phosphatase regulation and/or generation of precursor metabolites and energy. This is an uncharacterized protein from Saccharomyces cerevisiae (strain ATCC 204508 / S288c) (Baker's yeast).